The chain runs to 421 residues: Divalent metal cation transporter MntH (421 aa).

11 consecutive transmembrane segments (helical) span residues 27 to 47 (LGPA…ATNI), 51 to 71 (SLFD…AIFL), 100 to 120 (WFLW…EFLG), 128 to 148 (LFHI…FAIV), 160 to 180 (GIIF…LFIA), 201 to 221 (AMLI…IYLH), 248 to 268 (ILVA…VSAA), 289 to 309 (PLLG…SGFS), 337 to 357 (LVTM…LKSL), 358 to 378 (IVSQ…LLLI), and 396 to 416 (IMGV…LYLT).

It belongs to the NRAMP family.

It localises to the cell membrane. Functionally, h(+)-stimulated, divalent metal cation uptake system. The chain is Divalent metal cation transporter MntH from Caldanaerobacter subterraneus subsp. tengcongensis (strain DSM 15242 / JCM 11007 / NBRC 100824 / MB4) (Thermoanaerobacter tengcongensis).